An 89-amino-acid chain; its full sequence is Insulin (89 aa).

3 disulfides stabilise this stretch: C7/C75, C19/C88, and C74/C79. The propeptide at 33–66 (DVGPLSAFRDLEPPLDTEMEDRFPYRQQLAGSKM) is c peptide.

It belongs to the insulin family. In terms of assembly, heterodimer of a B chain and an A chain linked by two disulfide bonds.

It is found in the secreted. Insulin decreases blood glucose concentration. It increases cell permeability to monosaccharides, amino acids and fatty acids. It accelerates glycolysis, the pentose phosphate cycle, and glycogen synthesis in liver. This is Insulin (ins) from Callorhinchus milii (Ghost shark).